Here is a 360-residue protein sequence, read N- to C-terminus: Protein phosphatase 1 regulatory subunit 7 (360 aa).

The interval 1–64 (MAAERGAGQQ…GEEDPEEEHE (64 aa)) is disordered. Alanine 2 is subject to N-acetylalanine. Residues serine 12, serine 24, serine 27, serine 44, and serine 47 each carry the phosphoserine modification. A compositionally biased stretch (basic and acidic residues) spans 17 to 34 (EVDRRVESEESGDEEGKK). The span at 53 to 63 (ERGEEDPEEEH) shows a compositional bias: acidic residues. 11 LRR repeats span residues 77-98 (DAEDVDLNHYRIGKIEGFEVLK), 99-120 (KVKTLCLRQNLIKCIENLEELQ), 121-142 (SLRELDLYDNQIKKIENLEALT), 143-164 (ELEILDISFNLLRNIEGVDKLT), 165-186 (RLKKLFLVNNKISKIENLSNLH), 187-208 (QLQMLELGSNRIRAIENIDTLT), 209-230 (NLESLFLGKNKITKLQNLDALT), 231-252 (NLTVLSMQSNRLTKIEGLQNLV), 253-274 (NLRELYLSHNGIEVIEGLENNN), 275-296 (KLTMLDIASNRIKKIENISHLT), and 297-318 (ELQEFWMNDNLLESWSDLDELK). Serine 322 is modified (phosphoserine). Residues 331–360 (NPLQKDPQYRRKVMLALPSVRQIDATFVRF) form the LRRCT domain.

Belongs to the SDS22 family. In terms of assembly, interacts with PPP1CA, PPP1CB and PPP1CC/PPP1G isoform 1. As to expression, widely expressed.

It localises to the nucleus. In terms of biological role, regulatory subunit of protein phosphatase 1. This is Protein phosphatase 1 regulatory subunit 7 (PPP1R7) from Homo sapiens (Human).